Consider the following 114-residue polypeptide: Putative antiporter subunit mnhC2 (114 aa).

3 consecutive transmembrane segments (helical) span residues 3–23, 28–48, and 72–92; these read LILL…ILSI, IVIG…SMGT, and AIVL…LVLV.

The protein belongs to the CPA3 antiporters (TC 2.A.63) subunit C family. In terms of assembly, may form a heterooligomeric complex that consists of seven subunits: mnhA2, mnhB2, mnhC2, mnhD2, mnhE2, mnhF2 and mnhG2.

It localises to the cell membrane. The chain is Putative antiporter subunit mnhC2 (mnhC2) from Staphylococcus aureus (strain MRSA252).